The primary structure comprises 445 residues: Chromosome partition protein MukF (445 aa).

The leucine-zipper stretch occupies residues 213–241; it reads LSETSSTLRELQDTLQAASDELQTQILDI.

It belongs to the MukF family. Interacts, and probably forms a ternary complex, with MukE and MukB via its C-terminal region. The complex formation is stimulated by calcium or magnesium. It is required for an interaction between MukE and MukB.

It is found in the cytoplasm. The protein resides in the nucleoid. Involved in chromosome condensation, segregation and cell cycle progression. May participate in facilitating chromosome segregation by condensation DNA from both sides of a centrally located replisome during cell division. Not required for mini-F plasmid partitioning. Probably acts via its interaction with MukB and MukE. Overexpression results in anucleate cells. It has a calcium binding activity. The polypeptide is Chromosome partition protein MukF (Vibrio parahaemolyticus serotype O3:K6 (strain RIMD 2210633)).